The primary structure comprises 134 residues: ATP synthase epsilon chain (134 aa).

This sequence belongs to the ATPase epsilon chain family. In terms of assembly, F-type ATPases have 2 components, CF(1) - the catalytic core - and CF(0) - the membrane proton channel. CF(1) has five subunits: alpha(3), beta(3), gamma(1), delta(1), epsilon(1). CF(0) has three main subunits: a, b and c.

It localises to the cell membrane. Functionally, produces ATP from ADP in the presence of a proton gradient across the membrane. This is ATP synthase epsilon chain from Staphylococcus saprophyticus subsp. saprophyticus (strain ATCC 15305 / DSM 20229 / NCIMB 8711 / NCTC 7292 / S-41).